Reading from the N-terminus, the 195-residue chain is Ephrin-A2 (195 aa).

An N-terminal signal peptide occupies residues 1-16; sequence MELSLVVFTVVCWVSV. The 134-residue stretch at 24-157 folds into the Ephrin RBD domain; that stretch reads SDRHAVYWNS…KLKVYVKPTS (134 aa). N-linked (GlcNAc...) asparagine glycosylation is present at asparagine 32. Cystine bridges form between cysteine 57–cysteine 97 and cysteine 85–cysteine 146. Cysteine 174 is lipidated: GPI-anchor amidated cysteine. Residues 175–195 constitute a propeptide, removed in mature form; that stretch reads GADGPCLAVLMLLLVFLLAGV.

Belongs to the ephrin family. In terms of assembly, binds to the receptor tyrosine kinases epha2, epha3, epha4 and epha5. Interacts with epha8; activates epha8. As to expression, widespread expression in the embryo.

It is found in the cell membrane. Cell surface GPI-bound ligand for Eph receptors, a family of receptor tyrosine kinases which are crucial for migration, repulsion and adhesion during neuronal, vascular and epithelial development. Binds promiscuously Eph receptors residing on adjacent cells, leading to contact-dependent bidirectional signaling into neighboring cells. The signaling pathway downstream of the receptor is referred to as forward signaling while the signaling pathway downstream of the ephrin ligand is referred to as reverse signaling. With the epha2 receptor may play a role in bone remodeling through regulation of osteoclastogenesis and osteoblastogenesis. The polypeptide is Ephrin-A2 (efna2) (Danio rerio (Zebrafish)).